We begin with the raw amino-acid sequence, 308 residues long: Ribonuclease HIII (308 aa).

An RNase H type-2 domain is found at 92-308 (DNHIGSDEAG…ANTQKAQKLL (217 aa)). Residues Asp-98, Glu-99, and Asp-204 each coordinate a divalent metal cation.

It belongs to the RNase HII family. RnhC subfamily. Requires Mn(2+) as cofactor. Mg(2+) serves as cofactor.

Its subcellular location is the cytoplasm. The catalysed reaction is Endonucleolytic cleavage to 5'-phosphomonoester.. Endonuclease that specifically degrades the RNA of RNA-DNA hybrids. This chain is Ribonuclease HIII, found in Oceanobacillus iheyensis (strain DSM 14371 / CIP 107618 / JCM 11309 / KCTC 3954 / HTE831).